We begin with the raw amino-acid sequence, 220 residues long: 6-phosphogluconolactonase (220 aa).

It belongs to the glucosamine/galactosamine-6-phosphate isomerase family. 6-phosphogluconolactonase subfamily.

It carries out the reaction 6-phospho-D-glucono-1,5-lactone + H2O = 6-phospho-D-gluconate + H(+). It participates in carbohydrate degradation; pentose phosphate pathway; D-ribulose 5-phosphate from D-glucose 6-phosphate (oxidative stage): step 2/3. In terms of biological role, hydrolysis of 6-phosphogluconolactone to 6-phosphogluconate. The protein is 6-phosphogluconolactonase (pgl) of Thermotoga maritima (strain ATCC 43589 / DSM 3109 / JCM 10099 / NBRC 100826 / MSB8).